Consider the following 454-residue polypeptide: Chromosomal replication initiator protein DnaA (454 aa).

The interval 1–83 (MTEKEHFFWN…IKVEYVFDEA (83 aa)) is domain I, interacts with DnaA modulators. Residues 83 to 113 (ALVSETKPTLANNDFSNKREQQTPDLPTLNS) form a domain II region. The domain III, AAA+ region stretch occupies residues 114–332 (DLNSKYTFDN…GALKDISLVA (219 aa)). ATP contacts are provided by Gly-158, Gly-160, Lys-161, and Thr-162. Positions 333 to 454 (NVRQLDTITV…EIDTIKNKIK (122 aa)) are domain IV, binds dsDNA.

It belongs to the DnaA family. Oligomerizes as a right-handed, spiral filament on DNA at oriC.

It is found in the cytoplasm. Its function is as follows. Plays an essential role in the initiation and regulation of chromosomal replication. ATP-DnaA binds to the origin of replication (oriC) to initiate formation of the DNA replication initiation complex once per cell cycle. Binds the DnaA box (a 9 base pair repeat at the origin) and separates the double-stranded (ds)DNA. Forms a right-handed helical filament on oriC DNA; dsDNA binds to the exterior of the filament while single-stranded (ss)DNA is stabiized in the filament's interior. The ATP-DnaA-oriC complex binds and stabilizes one strand of the AT-rich DNA unwinding element (DUE), permitting loading of DNA polymerase. After initiation quickly degrades to an ADP-DnaA complex that is not apt for DNA replication. Binds acidic phospholipids. This Streptococcus thermophilus (strain ATCC BAA-250 / LMG 18311) protein is Chromosomal replication initiator protein DnaA.